The chain runs to 151 residues: D-aminoacyl-tRNA deacylase (151 aa).

The Gly-cisPro motif, important for rejection of L-amino acids signature appears at Gly-136–Pro-137.

This sequence belongs to the DTD family. Homodimer.

The protein resides in the cytoplasm. The enzyme catalyses glycyl-tRNA(Ala) + H2O = tRNA(Ala) + glycine + H(+). It catalyses the reaction a D-aminoacyl-tRNA + H2O = a tRNA + a D-alpha-amino acid + H(+). Functionally, an aminoacyl-tRNA editing enzyme that deacylates mischarged D-aminoacyl-tRNAs. Also deacylates mischarged glycyl-tRNA(Ala), protecting cells against glycine mischarging by AlaRS. Acts via tRNA-based rather than protein-based catalysis; rejects L-amino acids rather than detecting D-amino acids in the active site. By recycling D-aminoacyl-tRNA to D-amino acids and free tRNA molecules, this enzyme counteracts the toxicity associated with the formation of D-aminoacyl-tRNA entities in vivo and helps enforce protein L-homochirality. This chain is D-aminoacyl-tRNA deacylase, found in Streptococcus gordonii (strain Challis / ATCC 35105 / BCRC 15272 / CH1 / DL1 / V288).